The sequence spans 312 residues: Transcription initiation factor IIB (312 aa).

The TFIIB-type zinc-finger motif lies at 10 to 42 (FVQTCSDCGETQNIVEDYKNGYHVCGRCGCIVG). The Zn(2+) site is built by cysteine 14, cysteine 17, cysteine 34, and cysteine 37. 2 consecutive repeat copies span residues 120 to 196 (FCER…LISP) and 213 to 290 (FCSD…ELLT).

It belongs to the TFIIB family. Associates with TFIID-IIA (DA complex) to form TFIID-IIA-IIB (DAB-complex) which is then recognized by polymerase II.

Its subcellular location is the nucleus. Functionally, general factor that plays a major role in the activation of eukaryotic genes transcribed by RNA polymerase II. This chain is Transcription initiation factor IIB, found in Encephalitozoon cuniculi (strain GB-M1) (Microsporidian parasite).